The following is a 568-amino-acid chain: Proline--tRNA ligase (568 aa).

Belongs to the class-II aminoacyl-tRNA synthetase family. ProS type 1 subfamily. Homodimer.

Its subcellular location is the cytoplasm. The enzyme catalyses tRNA(Pro) + L-proline + ATP = L-prolyl-tRNA(Pro) + AMP + diphosphate. In terms of biological role, catalyzes the attachment of proline to tRNA(Pro) in a two-step reaction: proline is first activated by ATP to form Pro-AMP and then transferred to the acceptor end of tRNA(Pro). As ProRS can inadvertently accommodate and process non-cognate amino acids such as alanine and cysteine, to avoid such errors it has two additional distinct editing activities against alanine. One activity is designated as 'pretransfer' editing and involves the tRNA(Pro)-independent hydrolysis of activated Ala-AMP. The other activity is designated 'posttransfer' editing and involves deacylation of mischarged Ala-tRNA(Pro). The misacylated Cys-tRNA(Pro) is not edited by ProRS. This Aliarcobacter butzleri (strain RM4018) (Arcobacter butzleri) protein is Proline--tRNA ligase.